A 412-amino-acid chain; its full sequence is Vacuolar calcium ion transporter (412 aa).

The Cytoplasmic portion of the chain corresponds to 1-55 (MIERLKIAKNRLEAMNSFNFPAQDRHERAPLLGSEYDHSMARQLSLLNVVGMTKS). A helical membrane pass occupies residues 56–76 (VLMSSYFNLMLVFVPIGLIAG). At 77-83 (WFEWNAK) the chain is on the lumenal side. Residues 84 to 104 (SVFILNMLAIIPLASLLSFAT) form a helical membrane-spanning segment. Over 105–114 (EQLSIISGPT) the chain is Cytoplasmic. Residues 115–135 (LGALLNASFGNAIELIVGVLA) form a helical membrane-spanning segment. Residues 136–148 (LKRGELRIVQSSL) lie on the Lumenal side of the membrane. Residues 149–169 (LGSILSNLLLVFGMCLVTTGI) form a helical membrane-spanning segment. Topologically, residues 170-177 (RREITTFN) are cytoplasmic. The helical transmembrane segment at 178 to 198 (ITVAQTMIAMLALSTATILIP) threads the bilayer. Residues 199–215 (ATFHYSLPDNANSENAL) lie on the Lumenal side of the membrane. A helical membrane pass occupies residues 216-236 (LHVSRGTAVIVLIVYVLLLVF). Residues 237–264 (QLKTHKHVCHDPSEVEEETEPRILGLRS) lie on the Cytoplasmic side of the membrane. The helical transmembrane segment at 265–285 (SIAMLAIVTVFVSLCADYLVG) threads the bilayer. The Lumenal portion of the chain corresponds to 286–299 (SIDQLVEEVNISKT). Residues 300-320 (FVGLVILPVVGNAAEHVTAIV) traverse the membrane as a helical segment. The Cytoplasmic segment spans residues 321 to 334 (VSYRGQMDLALGVA). A helical transmembrane segment spans residues 335–355 (IGSSIQIALFLAPFLVIVGWI). At 356–358 (ISQ) the chain is on the lumenal side. Residues 359 to 379 (PLTLYFESLETVILFVSVFLV) form a helical membrane-spanning segment. The Cytoplasmic portion of the chain corresponds to 380–389 (NYLIQDGATH). A helical membrane pass occupies residues 390–410 (WLEGVQLLALYAIVVLAFFYY). Over 411–412 (PQ) the chain is Lumenal.

The protein belongs to the Ca(2+):cation antiporter (CaCA) (TC 2.A.19) family.

It is found in the vacuole membrane. It localises to the endoplasmic reticulum membrane. Has a role in promoting intracellular calcium ion sequestration via the exchange of calcium ions for hydrogen ions across the vacuolar membrane. Involved also in manganese ion homeostasis via its uptake into the vacuole. The protein is Vacuolar calcium ion transporter (vcx1) of Schizosaccharomyces pombe (strain 972 / ATCC 24843) (Fission yeast).